The chain runs to 376 residues: N-acetyldiaminopimelate deacetylase (376 aa).

Aspartate 69 is an active-site residue. Catalysis depends on glutamate 128, which acts as the Proton acceptor.

This sequence belongs to the peptidase M20A family. N-acetyldiaminopimelate deacetylase subfamily.

The catalysed reaction is N-acetyl-(2S,6S)-2,6-diaminopimelate + H2O = (2S,6S)-2,6-diaminopimelate + acetate. It functions in the pathway amino-acid biosynthesis; L-lysine biosynthesis via DAP pathway; LL-2,6-diaminopimelate from (S)-tetrahydrodipicolinate (acetylase route): step 3/3. Its function is as follows. Catalyzes the conversion of N-acetyl-diaminopimelate to diaminopimelate and acetate. In Streptococcus pneumoniae serotype 4 (strain ATCC BAA-334 / TIGR4), this protein is N-acetyldiaminopimelate deacetylase.